Consider the following 358-residue polypeptide: RNA demethylase ALKBH5 (358 aa).

The tract at residues 1–50 (MSATYTDLREKLQSLYRDSPKEVRKRKQPTSDTEEEEAASEPEEEEEARK) is disordered. Residues 7 to 22 (DLREKLQSLYRDSPKE) are compositionally biased toward basic and acidic residues. Acidic residues predominate over residues 32 to 46 (DTEEEEAASEPEEEE). Y105 is an active-site residue. 2-oxoglutarate contacts are provided by N159, Y161, H170, H232, and R243. Cysteines 196 and 233 form a disulfide. 2 disordered regions span residues 259–312 (EMKS…RRSV) and 334–358 (DYVD…MRRH). Positions 262–278 (SLSSSYQPERLQGSNRQ) are enriched in polar residues. The segment covering 279 to 288 (HILKPKRSHR) has biased composition (basic residues). Over residues 289-310 (KADPDAAHRPRILEMDKEENRR) the composition is skewed to basic and acidic residues.

It belongs to the alkB family. As to quaternary structure, monomer. Fe(2+) serves as cofactor.

The protein localises to the nucleus speckle. The enzyme catalyses an N(6)-methyladenosine in mRNA + 2-oxoglutarate + O2 = an adenosine in mRNA + formaldehyde + succinate + CO2. In terms of biological role, dioxygenase that specifically demethylates N(6)-methyladenosine (m6A) RNA, the most prevalent internal modification of messenger RNA (mRNA) in higher eukaryotes. Demethylates RNA by oxidative demethylation, which requires molecular oxygen, alpha-ketoglutarate and iron. Demethylation of m6A mRNA affects mRNA processing, translation and export. The polypeptide is RNA demethylase ALKBH5 (alkbh5) (Xenopus tropicalis (Western clawed frog)).